We begin with the raw amino-acid sequence, 424 residues long: UDP-N-acetylglucosamine 1-carboxyvinyltransferase (424 aa).

Position 22–23 (22–23 (KN)) interacts with phosphoenolpyruvate. A UDP-N-acetyl-alpha-D-glucosamine-binding site is contributed by R93. C117 functions as the Proton donor in the catalytic mechanism. C117 bears the 2-(S-cysteinyl)pyruvic acid O-phosphothioketal mark. UDP-N-acetyl-alpha-D-glucosamine contacts are provided by residues 122-126 (RPIDL), D307, and V329.

Belongs to the EPSP synthase family. MurA subfamily.

Its subcellular location is the cytoplasm. The enzyme catalyses phosphoenolpyruvate + UDP-N-acetyl-alpha-D-glucosamine = UDP-N-acetyl-3-O-(1-carboxyvinyl)-alpha-D-glucosamine + phosphate. It participates in cell wall biogenesis; peptidoglycan biosynthesis. Functionally, cell wall formation. Adds enolpyruvyl to UDP-N-acetylglucosamine. This is UDP-N-acetylglucosamine 1-carboxyvinyltransferase from Chlorobium luteolum (strain DSM 273 / BCRC 81028 / 2530) (Pelodictyon luteolum).